The sequence spans 281 residues: UDP-N-acetylenolpyruvoylglucosamine reductase (281 aa).

The FAD-binding PCMH-type domain occupies 17–180; that stretch reads VGGKAKKLII…LSATFKFDNG (164 aa). Arg-159 is an active-site residue. Ser-206 serves as the catalytic Proton donor. Glu-276 is a catalytic residue.

Belongs to the MurB family. The cofactor is FAD.

It localises to the cytoplasm. It carries out the reaction UDP-N-acetyl-alpha-D-muramate + NADP(+) = UDP-N-acetyl-3-O-(1-carboxyvinyl)-alpha-D-glucosamine + NADPH + H(+). It participates in cell wall biogenesis; peptidoglycan biosynthesis. Functionally, cell wall formation. The chain is UDP-N-acetylenolpyruvoylglucosamine reductase from Fusobacterium nucleatum subsp. nucleatum (strain ATCC 25586 / DSM 15643 / BCRC 10681 / CIP 101130 / JCM 8532 / KCTC 2640 / LMG 13131 / VPI 4355).